Consider the following 193-residue polypeptide: Ion-translocating oxidoreductase complex subunit A (193 aa).

The next 6 helical transmembrane spans lie at Ala5–Leu25, Ile39–Ile59, Phe62–Ala82, Leu102–Leu122, Thr134–Ile154, and Ser171–Val191.

This sequence belongs to the NqrDE/RnfAE family. The complex is composed of six subunits: RnfA, RnfB, RnfC, RnfD, RnfE and RnfG.

It is found in the cell inner membrane. Its function is as follows. Part of a membrane-bound complex that couples electron transfer with translocation of ions across the membrane. In Pectobacterium atrosepticum (strain SCRI 1043 / ATCC BAA-672) (Erwinia carotovora subsp. atroseptica), this protein is Ion-translocating oxidoreductase complex subunit A.